Here is a 360-residue protein sequence, read N- to C-terminus: Phospho-N-acetylmuramoyl-pentapeptide-transferase (360 aa).

Transmembrane regions (helical) follow at residues 27-47, 71-91, 93-113, 134-154, 168-188, 199-219, 239-259, 262-282, 288-308, and 337-357; these read GALI…INSL, TPTM…LLWA, LSSI…SIGF, LGLE…NGQA, FIIN…VGAG, GLAI…AYLS, LAVV…FNAP, AIFM…TVAV, IVLV…IIQV, and QVVI…LSTL.

The protein belongs to the glycosyltransferase 4 family. MraY subfamily. It depends on Mg(2+) as a cofactor.

Its subcellular location is the cell inner membrane. It carries out the reaction UDP-N-acetyl-alpha-D-muramoyl-L-alanyl-gamma-D-glutamyl-meso-2,6-diaminopimeloyl-D-alanyl-D-alanine + di-trans,octa-cis-undecaprenyl phosphate = di-trans,octa-cis-undecaprenyl diphospho-N-acetyl-alpha-D-muramoyl-L-alanyl-D-glutamyl-meso-2,6-diaminopimeloyl-D-alanyl-D-alanine + UMP. The protein operates within cell wall biogenesis; peptidoglycan biosynthesis. In terms of biological role, catalyzes the initial step of the lipid cycle reactions in the biosynthesis of the cell wall peptidoglycan: transfers peptidoglycan precursor phospho-MurNAc-pentapeptide from UDP-MurNAc-pentapeptide onto the lipid carrier undecaprenyl phosphate, yielding undecaprenyl-pyrophosphoryl-MurNAc-pentapeptide, known as lipid I. The polypeptide is Phospho-N-acetylmuramoyl-pentapeptide-transferase (Mesorhizobium japonicum (strain LMG 29417 / CECT 9101 / MAFF 303099) (Mesorhizobium loti (strain MAFF 303099))).